A 1176-amino-acid chain; its full sequence is Histidine kinase 2 (1176 aa).

At 1–29 (MSITCELLNLTSKKAKKSSSSDKKWLKKP) the chain is on the cytoplasmic side. A helical membrane pass occupies residues 30-50 (LFFLILCGSLVIVLVMFLRLG). Residues 51–174 (RSQKEETDSC…LEQGLSSYLR (124 aa)) lie on the Extracellular side of the membrane. The chain crosses the membrane as a helical span at residues 175 to 195 (NAWWCLILGVLVCHKIYVSHS). The Cytoplasmic segment spans residues 196 to 232 (KARGERKEKVHLQEALAPKKQQQRAQTSSRGAGRWRK). The helical transmembrane segment at 233 to 253 (NILLLGILGGVSFSVWWFWDT) threads the bilayer. Topologically, residues 254 to 536 (NEEIIMKRRE…CRFKHKLPIP (283 aa)) are extracellular. The CHASE domain maps to 302–526 (IPSAIDQRTF…GDPSRNHEMH (225 aa)). A helical transmembrane segment spans residues 537 to 557 (WTAITPSILVLVITFLVGYIL). At 558-1176 (YEAINRIATV…TAVARFFEPC (619 aa)) the chain is on the cytoplasmic side. Positions 594-867 (TVSHEIRTPM…TFSFTGVFGK (274 aa)) constitute a Histidine kinase domain. Histidine 597 bears the Phosphohistidine; by autocatalysis mark. Response regulatory domains are found at residues 891–1013 (RALV…QETL) and 1036–1173 (QILV…ARFF). 4-aspartylphosphate is present on residues aspartate 942 and aspartate 1086.

In terms of assembly, self-interacts. Interacts with AHK3, AHP1, AHP2, AHP3, AHP5, ATAF2, AT2S3, BETAA-AD, CYP20-2, DRP1A, HIR1, HIR2, PI4KB1, PI4KG5 and At4g12060. In terms of processing, autophosphorylated predominantly on His residues. Activation probably requires a transfer of a phosphate group between a His in the transmitter domain and an Asp of the receiver domain. As to expression, expressed in roots, leaves and flowers, mostly in the vascular tissues. Present in seedlings.

Its subcellular location is the endoplasmic reticulum membrane. The enzyme catalyses ATP + protein L-histidine = ADP + protein N-phospho-L-histidine.. Activated by cytokinins to initiate phosphorelay signaling. In terms of biological role, cytokinins (CK) receptor related to bacterial two-component regulators. Functions as a histidine kinase and transmits the stress signal to a downstream MAPK cascade. This protein undergoes an ATP-dependent autophosphorylation at a conserved histidine residue in the kinase core, and a phosphoryl group is then transferred to a conserved aspartate residue in the receiver domain. In the presence of cytokinin, feeds phosphate to phosphorelay-integrating histidine phosphotransfer protein (HPt) and activates subsequent cascade. Involved in meristems establishment in seedlings. Redundant negative regulator of drought and salt stress responses and abscisic acid (ABA) signaling. Together with AHK3, plays a negative regulatory role in cold stress signaling via inhibition of ABA response, occurring independently of the cold acclimation pathway. Redundant positive regulator of cytokinin signaling that regulates many developmental processes including seed germination, cell division, seed size, chlorophyll retention during leaf senescence, root repression and shoot promotion. Involved in alkamides (e.g. N-isobutyl decanamide) and N-acylethanolamides (NAE) signaling that control meristematic activity and differentiation processes during plant development. Contributes to vascular bundle formation and secondary growth in a cytokinin-dependent manner, probably by promoting the maintenance of mitotic activity and/or identity of procambial cells. Together with AHK4, required for growth and reproduction promotion stimulated by the endophytic fungus Piriformospora indica in a trans-zeatin-dependent manner. Required by the cytokinin-dependent flower development regulation pathway. In Arabidopsis thaliana (Mouse-ear cress), this protein is Histidine kinase 2 (AHK2).